Reading from the N-terminus, the 265-residue chain is Tryptophan synthase alpha chain (265 aa).

Residues Glu48 and Asp59 each act as proton acceptor in the active site.

It belongs to the TrpA family. As to quaternary structure, tetramer of two alpha and two beta chains.

The catalysed reaction is (1S,2R)-1-C-(indol-3-yl)glycerol 3-phosphate + L-serine = D-glyceraldehyde 3-phosphate + L-tryptophan + H2O. The protein operates within amino-acid biosynthesis; L-tryptophan biosynthesis; L-tryptophan from chorismate: step 5/5. Its function is as follows. The alpha subunit is responsible for the aldol cleavage of indoleglycerol phosphate to indole and glyceraldehyde 3-phosphate. This chain is Tryptophan synthase alpha chain, found in Vesicomyosocius okutanii subsp. Calyptogena okutanii (strain HA).